We begin with the raw amino-acid sequence, 117 residues long: Large ribosomal subunit protein eL30B (117 aa).

Residues 1–14 (MSAAPTTAPVAAVS) show a composition bias toward low complexity. Residues 1 to 22 (MSAAPTTAPVAAVSKKGKKSGD) form a disordered region.

The protein belongs to the eukaryotic ribosomal protein eL30 family. In terms of assembly, component of the large ribosomal subunit (LSU). Mature yeast ribosomes consist of a small (40S) and a large (60S) subunit. The 40S small subunit contains 1 molecule of ribosomal RNA (18S rRNA) and at least 33 different proteins. The large 60S subunit contains 3 rRNA molecules (25S, 5.8S and 5S rRNA) and at least 46 different proteins.

The protein localises to the cytoplasm. In terms of biological role, component of the ribosome, a large ribonucleoprotein complex responsible for the synthesis of proteins in the cell. The small ribosomal subunit (SSU) binds messenger RNAs (mRNAs) and translates the encoded message by selecting cognate aminoacyl-transfer RNA (tRNA) molecules. The large subunit (LSU) contains the ribosomal catalytic site termed the peptidyl transferase center (PTC), which catalyzes the formation of peptide bonds, thereby polymerizing the amino acids delivered by tRNAs into a polypeptide chain. The nascent polypeptides leave the ribosome through a tunnel in the LSU and interact with protein factors that function in enzymatic processing, targeting, and the membrane insertion of nascent chains at the exit of the ribosomal tunnel. The polypeptide is Large ribosomal subunit protein eL30B (rpl3002) (Schizosaccharomyces pombe (strain 972 / ATCC 24843) (Fission yeast)).